The chain runs to 133 residues: Binder of sperm protein homolog 1 (133 aa).

The N-terminal stretch at methionine 1–serine 20 is a signal peptide. Fibronectin type-II domains are found at residues threonine 40–leucine 84 and serine 85–glutamate 133. 4 disulfide bridges follow: cysteine 45–cysteine 69, cysteine 59–cysteine 82, cysteine 90–cysteine 116, and cysteine 104–cysteine 131. The N-linked (GlcNAc...) asparagine glycan is linked to asparagine 72.

This sequence belongs to the seminal plasma protein family. As to expression, expressed only in the epididymis.

It is found in the secreted. Its function is as follows. Binds sperm in vitro and promotes sperm capacitation. Specifically promotes capacitation induced by high density lipoproteins (HDLs). Also binds heparin, phospholipid liposomes, and weakly to gelatin. Does not bind chondroitin sulfate B. The chain is Binder of sperm protein homolog 1 (Bsph1) from Mus musculus (Mouse).